Here is a 167-residue protein sequence, read N- to C-terminus: Putative NADH-quinone oxidoreductase subunit B 2 (167 aa).

The protein belongs to the complex I 20 kDa subunit family. NDH-1 is composed of 14 different subunits. Subunits NuoB, C, D, E, F, and G constitute the peripheral sector of the complex.

Its subcellular location is the cell inner membrane. The catalysed reaction is a quinone + NADH + 5 H(+)(in) = a quinol + NAD(+) + 4 H(+)(out). NDH-1 shuttles electrons from NADH, via FMN and iron-sulfur (Fe-S) centers, to quinones in the respiratory chain. Couples the redox reaction to proton translocation (for every two electrons transferred, four hydrogen ions are translocated across the cytoplasmic membrane), and thus conserves the redox energy in a proton gradient. In Burkholderia pseudomallei (strain 1710b), this protein is Putative NADH-quinone oxidoreductase subunit B 2.